The following is a 331-amino-acid chain: Vitamin B12 import system permease protein BtuC (331 aa).

The next 9 membrane-spanning stretches (helical) occupy residues L20–P42, L62–G84, G91–L113, V117–V136, L148–S170, S190–L209, L240–V262, L277–L299, and L306–V325.

It belongs to the binding-protein-dependent transport system permease family. FecCD subfamily. The complex is composed of two ATP-binding proteins (BtuD), two transmembrane proteins (BtuC) and a solute-binding protein (BtuF).

The protein resides in the cell inner membrane. Functionally, part of the ABC transporter complex BtuCDF involved in vitamin B12 import. Involved in the translocation of the substrate across the membrane. In Vibrio cholerae serotype O1 (strain ATCC 39315 / El Tor Inaba N16961), this protein is Vitamin B12 import system permease protein BtuC.